The sequence spans 298 residues: MQLEKMITEGSNTASAEIDRVSTLEMCRIINDEDKTVPLAVERVLPDIAAAIDVIHAQVSGGGRLIYLGAGTSGRLGILDASECPPTYGVKPGLVVGLIAGGEYAIQHAVEGTEDSREGGINDLKNINLTAQDVVVGIAASGRTPYVIAGLEYARQLGCRTVGISCNPGSAVSTTAEFAITPIVGAEVVTGSSRMKAGTAQKLVLNMLSTGLMIKSGKVFGNLMVDVVATNEKLHVRQVNIVKNATGCNAEQAEAALIACERNCKTAIVMVLKNLDAAEAKKRLDQHGGFIRQVLDKE.

In terms of domain architecture, SIS spans Ile55–Lys218. Residue Glu83 is the Proton donor of the active site. Glu114 is an active-site residue.

It belongs to the GCKR-like family. MurNAc-6-P etherase subfamily. Homodimer.

The catalysed reaction is N-acetyl-D-muramate 6-phosphate + H2O = N-acetyl-D-glucosamine 6-phosphate + (R)-lactate. It functions in the pathway amino-sugar metabolism; 1,6-anhydro-N-acetylmuramate degradation. The protein operates within amino-sugar metabolism; N-acetylmuramate degradation. It participates in cell wall biogenesis; peptidoglycan recycling. Functionally, specifically catalyzes the cleavage of the D-lactyl ether substituent of MurNAc 6-phosphate, producing GlcNAc 6-phosphate and D-lactate. Together with AnmK, is also required for the utilization of anhydro-N-acetylmuramic acid (anhMurNAc) either imported from the medium or derived from its own cell wall murein, and thus plays a role in cell wall recycling. The protein is N-acetylmuramic acid 6-phosphate etherase of Shigella sonnei (strain Ss046).